Reading from the N-terminus, the 62-residue chain is Photosystem II reaction center protein Z (62 aa).

The next 2 membrane-spanning stretches (helical) occupy residues 8–28 (AVFA…VVFA) and 41–61 (FSGT…NSLI).

It belongs to the PsbZ family. PSII is composed of 1 copy each of membrane proteins PsbA, PsbB, PsbC, PsbD, PsbE, PsbF, PsbH, PsbI, PsbJ, PsbK, PsbL, PsbM, PsbT, PsbY, PsbZ, Psb30/Ycf12, at least 3 peripheral proteins of the oxygen-evolving complex and a large number of cofactors. It forms dimeric complexes.

It localises to the plastid. It is found in the chloroplast thylakoid membrane. Its function is as follows. May control the interaction of photosystem II (PSII) cores with the light-harvesting antenna, regulates electron flow through the 2 photosystem reaction centers. PSII is a light-driven water plastoquinone oxidoreductase, using light energy to abstract electrons from H(2)O, generating a proton gradient subsequently used for ATP formation. The polypeptide is Photosystem II reaction center protein Z (Liriodendron tulipifera (Tuliptree)).